The sequence spans 67 residues: Large ribosomal subunit protein bL32 (67 aa).

Residues 1 to 19 (MAVPKRKMSRANTRMRRSQ) are compositionally biased toward basic residues. A disordered region spans residues 1–22 (MAVPKRKMSRANTRMRRSQWKA).

Belongs to the bacterial ribosomal protein bL32 family.

The chain is Large ribosomal subunit protein bL32 from Kocuria rhizophila (strain ATCC 9341 / DSM 348 / NBRC 103217 / DC2201).